The following is a 282-amino-acid chain: Bis(5'-nucleosyl)-tetraphosphatase, symmetrical (282 aa).

It belongs to the Ap4A hydrolase family.

The enzyme catalyses P(1),P(4)-bis(5'-adenosyl) tetraphosphate + H2O = 2 ADP + 2 H(+). Its function is as follows. Hydrolyzes diadenosine 5',5'''-P1,P4-tetraphosphate to yield ADP. This Paraburkholderia phymatum (strain DSM 17167 / CIP 108236 / LMG 21445 / STM815) (Burkholderia phymatum) protein is Bis(5'-nucleosyl)-tetraphosphatase, symmetrical.